The following is a 707-amino-acid chain: Leukotoxin export ATP-binding protein LtxB (707 aa).

Positions 4–125 constitute a Peptidase C39 domain; the sequence is QKNTNLALQA…ERYQSKVILI (122 aa). Residue H83 is part of the active site. A run of 5 helical transmembrane segments spans residues 158 to 178, 191 to 211, 269 to 289, 295 to 315, and 387 to 407; these read LIVS…FQVV, LNVI…LGGL, ALTS…MWYY, LVVL…SPIL, and AVMV…DLSI. Positions 158–436 constitute an ABC transmembrane type-1 domain; it reads LIVSIFLQIF…LAQIWQDFQQ (279 aa). The 236-residue stretch at 468–703 folds into the ABC transporter domain; sequence ISFRNIKFRY…EKGLYSYLHQ (236 aa). 502 to 509 lines the ATP pocket; it reads GRSGSGKS.

The protein belongs to the ABC transporter superfamily. Protein-1 exporter (TC 3.A.1.109) family. In terms of assembly, probably part of a complex composed of LtxB, LtxD and TdeA, which forms a single transport channel across the two membranes.

It localises to the cell inner membrane. The catalysed reaction is ATP + H2O + proteinSide 1 = ADP + phosphate + proteinSide 2.. Its function is as follows. Involved in the export of the LtxA leukotoxin. The sequence is that of Leukotoxin export ATP-binding protein LtxB from Aggregatibacter actinomycetemcomitans (Actinobacillus actinomycetemcomitans).